The sequence spans 405 residues: Glutathione S-transferase LANCL1 (405 aa).

Cys282 lines the Zn(2+) pocket. Lys323 contacts glutathione. Cys328 and His329 together coordinate Zn(2+). Arg370 to Asp373 contacts glutathione.

This sequence belongs to the LanC-like protein family.

It localises to the cytoplasm. It is found in the cell membrane. It catalyses the reaction RX + glutathione = an S-substituted glutathione + a halide anion + H(+). The catalysed reaction is 1-chloro-2,4-dinitrobenzene + glutathione = 2,4-dinitrophenyl-S-glutathione + chloride + H(+). Functions as a glutathione transferase. Catalyzes conjugation of the glutathione (GSH) to artificial substrates 1-chloro-2,4-dinitrobenzene (CDNB) and p-nitrophenyl acetate. Binds glutathione. This is Glutathione S-transferase LANCL1 from Danio rerio (Zebrafish).